The sequence spans 609 residues: Proteasome-associated ATPase (609 aa).

Residues 1–27 (MGSSERSEAFGTPRESDMSSGDEAELE) form a disordered region. The stretch at 17–96 (DMSSGDEAEL…LREEVDRLGQ (80 aa)) forms a coiled coil. An ATP-binding site is contributed by 296–301 (GCGKTL). The interval 608-609 (YL) is docks into pockets in the proteasome alpha-ring.

The protein belongs to the AAA ATPase family. As to quaternary structure, homohexamer. Assembles into a hexameric ring structure that caps the 20S proteasome core. Strongly interacts with the prokaryotic ubiquitin-like protein Pup through a hydrophobic interface; the interacting region of ARC lies in its N-terminal coiled-coil domain. There is one Pup binding site per ARC hexamer ring. Upon ATP-binding, the C-terminus of ARC interacts with the alpha-rings of the proteasome core, possibly by binding to the intersubunit pockets.

The protein operates within protein degradation; proteasomal Pup-dependent pathway. Functionally, ATPase which is responsible for recognizing, binding, unfolding and translocation of pupylated proteins into the bacterial 20S proteasome core particle. May be essential for opening the gate of the 20S proteasome via an interaction with its C-terminus, thereby allowing substrate entry and access to the site of proteolysis. Thus, the C-termini of the proteasomal ATPase may function like a 'key in a lock' to induce gate opening and therefore regulate proteolysis. This chain is Proteasome-associated ATPase, found in Mycobacterium avium (strain 104).